Consider the following 565-residue polypeptide: Proline--tRNA ligase (565 aa).

Belongs to the class-II aminoacyl-tRNA synthetase family. ProS type 1 subfamily. In terms of assembly, homodimer.

It localises to the cytoplasm. It catalyses the reaction tRNA(Pro) + L-proline + ATP = L-prolyl-tRNA(Pro) + AMP + diphosphate. In terms of biological role, catalyzes the attachment of proline to tRNA(Pro) in a two-step reaction: proline is first activated by ATP to form Pro-AMP and then transferred to the acceptor end of tRNA(Pro). As ProRS can inadvertently accommodate and process non-cognate amino acids such as alanine and cysteine, to avoid such errors it has two additional distinct editing activities against alanine. One activity is designated as 'pretransfer' editing and involves the tRNA(Pro)-independent hydrolysis of activated Ala-AMP. The other activity is designated 'posttransfer' editing and involves deacylation of mischarged Ala-tRNA(Pro). The misacylated Cys-tRNA(Pro) is not edited by ProRS. The polypeptide is Proline--tRNA ligase (Lactobacillus helveticus (strain DPC 4571)).